A 660-amino-acid chain; its full sequence is Probable beta-hexosaminidase fdl (660 aa).

The first 36 residues, Met-1–Ala-36, serve as a signal peptide directing secretion. N-linked (GlcNAc...) asparagine glycans are attached at residues Asn-210, Asn-412, and Asn-452.

It belongs to the glycosyl hydrolase 20 family. In terms of tissue distribution, in third instar larval and early pupal brains, expressed in cells sending projections across the interhemispheric junction. In adult brain, expressed in mushroom body, ellipsoid body and pars intercerebralis.

The catalysed reaction is Hydrolysis of terminal non-reducing N-acetyl-D-hexosamine residues in N-acetyl-beta-D-hexosaminides.. Its function is as follows. Involved in brain restructurization via hormonal control during metamorphosis. Implicated in N-glycan processing. This is Probable beta-hexosaminidase fdl (fdl) from Drosophila melanogaster (Fruit fly).